The primary structure comprises 820 residues: Phenylalanine--tRNA ligase beta subunit (820 aa).

The 112-residue stretch at 39-150 folds into the tRNA-binding domain; sequence PAPVGGVLLV…GTAAPGTPLR (112 aa). Residues 435–510 form the B5 domain; sequence EVPQTITTTG…RLHGFTELPE (76 aa). 4 residues coordinate Mg(2+): Asp488, Asp494, Glu497, and Glu498. The FDX-ACB domain occupies 727-818; that stretch reads SRAPAAWRDL…AVKARGWAIR (92 aa).

It belongs to the phenylalanyl-tRNA synthetase beta subunit family. Type 1 subfamily. As to quaternary structure, tetramer of two alpha and two beta subunits. Requires Mg(2+) as cofactor.

The protein resides in the cytoplasm. It catalyses the reaction tRNA(Phe) + L-phenylalanine + ATP = L-phenylalanyl-tRNA(Phe) + AMP + diphosphate + H(+). The chain is Phenylalanine--tRNA ligase beta subunit (pheT) from Deinococcus radiodurans (strain ATCC 13939 / DSM 20539 / JCM 16871 / CCUG 27074 / LMG 4051 / NBRC 15346 / NCIMB 9279 / VKM B-1422 / R1).